The chain runs to 391 residues: Cyclin-B1-2 (391 aa).

The protein belongs to the cyclin family. Cyclin AB subfamily.

In Oryza sativa subsp. japonica (Rice), this protein is Cyclin-B1-2 (CYCB1-2).